Consider the following 576-residue polypeptide: Arginine--tRNA ligase (576 aa).

The short motif at 122 to 132 (PNVAKQMHVGH) is the 'HIGH' region element.

Belongs to the class-I aminoacyl-tRNA synthetase family. In terms of assembly, monomer.

The protein localises to the cytoplasm. It catalyses the reaction tRNA(Arg) + L-arginine + ATP = L-arginyl-tRNA(Arg) + AMP + diphosphate. The protein is Arginine--tRNA ligase of Yersinia pseudotuberculosis serotype O:3 (strain YPIII).